A 1076-amino-acid polypeptide reads, in one-letter code: Carbamoyl phosphate synthase large chain (1076 aa).

The carboxyphosphate synthetic domain stretch occupies residues 1-403 (MPKRTDIQSI…SLQKALRGLE (403 aa)). Residues Arg-129, Arg-169, Gly-175, Gly-176, Glu-208, Leu-210, Glu-215, Gly-241, Ile-242, His-243, Gln-285, and Glu-299 each contribute to the ATP site. Positions 133–328 (DKAMKSIGLE…IAKVAAKLAV (196 aa)) constitute an ATP-grasp 1 domain. Mg(2+) contacts are provided by Gln-285, Glu-299, and Asn-301. Positions 285, 299, and 301 each coordinate Mn(2+). The segment at 404-553 (VGAAGLDEKV…YSTYDEECEA (150 aa)) is oligomerization domain. The segment at 554 to 935 (NPTDKDKIMV…AYAKAELGCG (382 aa)) is carbamoyl phosphate synthetic domain. Residues 678–869 (QQAVQRLGLK…LAKIAARVMV (192 aa)) form the ATP-grasp 2 domain. The ATP site is built by Arg-714, Arg-753, Leu-755, Glu-760, Gly-785, Val-786, His-787, Ser-788, Gln-828, and Glu-840. Mg(2+)-binding residues include Gln-828, Glu-840, and Asn-842. The Mn(2+) site is built by Gln-828, Glu-840, and Asn-842. In terms of domain architecture, MGS-like spans 936 to 1076 (SVYPEGGRAL…LHARVKANQA (141 aa)). An allosteric domain region spans residues 936–1076 (SVYPEGGRAL…LHARVKANQA (141 aa)).

This sequence belongs to the CarB family. As to quaternary structure, composed of two chains; the small (or glutamine) chain promotes the hydrolysis of glutamine to ammonia, which is used by the large (or ammonia) chain to synthesize carbamoyl phosphate. Tetramer of heterodimers (alpha,beta)4. It depends on Mg(2+) as a cofactor. The cofactor is Mn(2+).

The enzyme catalyses hydrogencarbonate + L-glutamine + 2 ATP + H2O = carbamoyl phosphate + L-glutamate + 2 ADP + phosphate + 2 H(+). It carries out the reaction hydrogencarbonate + NH4(+) + 2 ATP = carbamoyl phosphate + 2 ADP + phosphate + 2 H(+). It functions in the pathway amino-acid biosynthesis; L-arginine biosynthesis; carbamoyl phosphate from bicarbonate: step 1/1. Its pathway is pyrimidine metabolism; UMP biosynthesis via de novo pathway; (S)-dihydroorotate from bicarbonate: step 1/3. Functionally, large subunit of the glutamine-dependent carbamoyl phosphate synthetase (CPSase). CPSase catalyzes the formation of carbamoyl phosphate from the ammonia moiety of glutamine, carbonate, and phosphate donated by ATP, constituting the first step of 2 biosynthetic pathways, one leading to arginine and/or urea and the other to pyrimidine nucleotides. The large subunit (synthetase) binds the substrates ammonia (free or transferred from glutamine from the small subunit), hydrogencarbonate and ATP and carries out an ATP-coupled ligase reaction, activating hydrogencarbonate by forming carboxy phosphate which reacts with ammonia to form carbamoyl phosphate. The sequence is that of Carbamoyl phosphate synthase large chain from Vibrio cholerae serotype O1 (strain ATCC 39315 / El Tor Inaba N16961).